The chain runs to 271 residues: 3-methyl-2-oxobutanoate hydroxymethyltransferase (271 aa).

Residues Asp-49 and Asp-88 each coordinate Mg(2+). Residues 49 to 50, Asp-88, and Lys-118 each bind 3-methyl-2-oxobutanoate; that span reads DS. Residue Glu-120 coordinates Mg(2+). The active-site Proton acceptor is the Glu-187.

This sequence belongs to the PanB family. In terms of assembly, homodecamer; pentamer of dimers. Mg(2+) serves as cofactor.

The protein localises to the cytoplasm. It catalyses the reaction 3-methyl-2-oxobutanoate + (6R)-5,10-methylene-5,6,7,8-tetrahydrofolate + H2O = 2-dehydropantoate + (6S)-5,6,7,8-tetrahydrofolate. It functions in the pathway cofactor biosynthesis; (R)-pantothenate biosynthesis; (R)-pantoate from 3-methyl-2-oxobutanoate: step 1/2. Its function is as follows. Catalyzes the reversible reaction in which hydroxymethyl group from 5,10-methylenetetrahydrofolate is transferred onto alpha-ketoisovalerate to form ketopantoate. This Bartonella tribocorum (strain CIP 105476 / IBS 506) protein is 3-methyl-2-oxobutanoate hydroxymethyltransferase.